The primary structure comprises 86 residues: Large ribosomal subunit protein bL27 (86 aa).

Residues 1–24 (MAHKKGTGSTRNGRDSNSKRLGVK) form a disordered region.

Belongs to the bacterial ribosomal protein bL27 family.

The chain is Large ribosomal subunit protein bL27 from Prochlorococcus marinus (strain MIT 9301).